The sequence spans 202 residues: Pyrrolidone-carboxylate peptidase (202 aa).

Catalysis depends on residues Glu-78, Cys-141, and His-165.

This sequence belongs to the peptidase C15 family. Homotetramer.

Its subcellular location is the cytoplasm. It carries out the reaction Release of an N-terminal pyroglutamyl group from a polypeptide, the second amino acid generally not being Pro.. In terms of biological role, removes 5-oxoproline from various penultimate amino acid residues except L-proline. This Thermosipho melanesiensis (strain DSM 12029 / CIP 104789 / BI429) protein is Pyrrolidone-carboxylate peptidase.